The following is a 484-amino-acid chain: uncharacterized protein (484 aa).

Residues 14-82 (VPLHRQIEQY…KGGGTKVVNS (69 aa)) enclose the HTH gntR-type domain. Positions 42-61 (QRTLADMFQVNRSTVTAAID) form a DNA-binding region, H-T-H motif. Lys327 bears the N6-(pyridoxal phosphate)lysine mark.

The protein in the C-terminal section; belongs to the class-I pyridoxal-phosphate-dependent aminotransferase family. The cofactor is pyridoxal 5'-phosphate.

This is an uncharacterized protein from Bacillus subtilis (strain 168).